A 104-amino-acid polypeptide reads, in one-letter code: Integration host factor subunit beta (104 aa).

Belongs to the bacterial histone-like protein family. As to quaternary structure, heterodimer of an alpha and a beta chain.

In terms of biological role, this protein is one of the two subunits of integration host factor, a specific DNA-binding protein that functions in genetic recombination as well as in transcriptional and translational control. This chain is Integration host factor subunit beta, found in Chromobacterium violaceum (strain ATCC 12472 / DSM 30191 / JCM 1249 / CCUG 213 / NBRC 12614 / NCIMB 9131 / NCTC 9757 / MK).